The following is a 782-amino-acid chain: Cyclic nucleotide-gated channel beta-3 (782 aa).

Disordered stretches follow at residues 1–111 (MFKS…PKSK) and 147–168 (GDISSPEASPQTAKPTAVPSTQ). The Cytoplasmic segment spans residues 1-213 (MFKSLTIKSN…SIDSYTDRLY (213 aa)). Composition is skewed to basic and acidic residues over residues 13–25 (KPREENDENKQDP) and 57–73 (EESHAKMQDKISEKNSL). Composition is skewed to polar residues over residues 74 to 83 (RDLTTNPNHQ) and 152 to 168 (PEASPQTAKPTAVPSTQ). A helical transmembrane segment spans residues 214–237 (LLWLLLVTIAYNWNCWLIPLRLVF). Over 238–244 (PYQTPDN) the chain is Extracellular. Residues 245–265 (THYWFITDITCDIIYLCDMLL) form a helical membrane-spanning segment. Residues 266 to 294 (IQPRLQFIKGGDIMVDSNELKRHYRSSTK) are Cytoplasmic-facing. Residues 295–312 (FQLDVASVMPFDVFYLFF) traverse the membrane as a helical segment. The Extracellular portion of the chain corresponds to 313–315 (GFN). Residues 316-330 (PVFRMNRILKYTSFF) form a helical membrane-spanning segment. Over 331–343 (EFNHHLESIMDKA) the chain is Cytoplasmic. Residues 343–442 (AYIYRVIRTT…IGQMQDVIGA (100 aa)) form an ion conduction pathway region. A helical transmembrane segment spans residues 344 to 366 (YIYRVIRTTGYLLYTLHINACIY). At 367–388 (YWASDYEGIGSTKWVYNGEGNK) the chain is on the extracellular side. A run of 2 helical transmembrane segments spans residues 389–415 (YLRCYYWAVRTLITIGGLPEPQTSFEI) and 416–440 (VFQLLNFFSGVFVFSSLIGQMQDVI). The selectivity filter stretch occupies residues 402–405 (TIGG). Residues 441 to 782 (GAATANQNNF…TIEVKEKAKQ (342 aa)) are Cytoplasmic-facing. The interval 445–521 (ANQNNFRISM…SIISKVELFK (77 aa)) is C-linker. A cyclic nucleotide-binding domain region spans residues 525–641 (TQMIYDMLLR…LLMKKASVLL (117 aa)). Residues Gly-586, Glu-587, Arg-599, and Thr-600 each coordinate 3',5'-cyclic GMP. Residues 692 to 724 (EQTIQKTSENSEEGGGKRREYEDKEREPSEKIL) are disordered. Residues 705–724 (GGGKRREYEDKEREPSEKIL) show a composition bias toward basic and acidic residues.

It belongs to the cyclic nucleotide-gated cation channel (TC 1.A.1.5) family. CNGB3 subfamily. In terms of assembly, forms heterotetrameric channels composed of CNGA3 and CNGB3 subunits with 3:1 stoichiometry.

The protein localises to the cell membrane. The catalysed reaction is Ca(2+)(in) = Ca(2+)(out). It catalyses the reaction Na(+)(in) = Na(+)(out). It carries out the reaction K(+)(in) = K(+)(out). The enzyme catalyses NH4(+)(in) = NH4(+)(out). The catalysed reaction is Rb(+)(in) = Rb(+)(out). It catalyses the reaction Li(+)(in) = Li(+)(out). It carries out the reaction Cs(+)(in) = Cs(+)(out). In terms of biological role, pore-forming subunit of the cone cyclic nucleotide-gated channel. Mediates cone photoresponses at bright light converting transient changes in intracellular cGMP levels into electrical signals. In the dark, cGMP levels are high and keep the channel open enabling a steady inward current carried by Na(+) and Ca(2+) ions that leads to membrane depolarization and neurotransmitter release from synaptic terminals. Upon photon absorption cGMP levels decline leading to channel closure and membrane hyperpolarization that ultimately slows neurotransmitter release and signals the presence of light, the end point of the phototransduction cascade. Conducts cGMP- and cAMP-gated ion currents, with permeability for monovalent and divalent cations. In Canis lupus familiaris (Dog), this protein is Cyclic nucleotide-gated channel beta-3.